Here is a 383-residue protein sequence, read N- to C-terminus: uncharacterized protein (383 aa).

It to V.anguillarum virulence protein VirA.

Its function is as follows. Could have an enzymatic function. This is an uncharacterized protein from Sinorhizobium fredii (strain NBRC 101917 / NGR234).